A 222-amino-acid polypeptide reads, in one-letter code: ATP-dependent dethiobiotin synthetase BioD 2 (222 aa).

T17 is a Mg(2+) binding site. The active site involves K38. T42 provides a ligand contact to substrate. Positions 55 and 112 each coordinate Mg(2+). ATP-binding positions include D55, 112–115 (EGCG), 172–173 (NR), 201–203 (PYL), and E208.

Belongs to the dethiobiotin synthetase family. In terms of assembly, homodimer. The cofactor is Mg(2+).

The protein resides in the cytoplasm. It carries out the reaction (7R,8S)-7,8-diammoniononanoate + CO2 + ATP = (4R,5S)-dethiobiotin + ADP + phosphate + 3 H(+). It functions in the pathway cofactor biosynthesis; biotin biosynthesis; biotin from 7,8-diaminononanoate: step 1/2. In terms of biological role, catalyzes a mechanistically unusual reaction, the ATP-dependent insertion of CO2 between the N7 and N8 nitrogen atoms of 7,8-diaminopelargonic acid (DAPA, also called 7,8-diammoniononanoate) to form a ureido ring. The sequence is that of ATP-dependent dethiobiotin synthetase BioD 2 from Yersinia pestis.